Consider the following 236-residue polypeptide: 2,3,4,5-tetrahydropyridine-2,6-dicarboxylate N-acetyltransferase (236 aa).

Belongs to the transferase hexapeptide repeat family. DapH subfamily.

The catalysed reaction is (S)-2,3,4,5-tetrahydrodipicolinate + acetyl-CoA + H2O = L-2-acetamido-6-oxoheptanedioate + CoA. Its pathway is amino-acid biosynthesis; L-lysine biosynthesis via DAP pathway; LL-2,6-diaminopimelate from (S)-tetrahydrodipicolinate (acetylase route): step 1/3. Its function is as follows. Catalyzes the transfer of an acetyl group from acetyl-CoA to tetrahydrodipicolinate. The protein is 2,3,4,5-tetrahydropyridine-2,6-dicarboxylate N-acetyltransferase of Brevibacillus brevis (strain 47 / JCM 6285 / NBRC 100599).